Consider the following 150-residue polypeptide: Transthyretin (150 aa).

The signal sequence occupies residues 1–20; that stretch reads MGSSSLLLVCLAGMVYLTEA. Cys33 bears the Sulfocysteine mark. L-thyroxine-binding residues include Lys38, Glu77, and Ser140.

It belongs to the transthyretin family. In terms of assembly, homotetramer. Dimer of dimers. In the homotetramer, subunits assemble around a central channel that can accommodate two ligand molecules. Interacts with RBP4. Sulfonation of the reactive cysteine Cys-33 enhances the stability of the native conformation of TTR, avoiding misassembly of the protein leading to amyloid formation. In terms of tissue distribution, detected in choroid plexus (at protein level). Detected in choroid plexus.

Its subcellular location is the secreted. Its function is as follows. Thyroid hormone-binding protein. Probably transports thyroxine from the bloodstream to the brain. In Tiliqua rugosa (Shingleback lizard), this protein is Transthyretin (TTR).